A 427-amino-acid polypeptide reads, in one-letter code: Trigger factor (427 aa).

Residues 163 to 248 form the PPIase FKBP-type domain; sequence GNIAIIDFKG…VKGIKAKELP (86 aa).

This sequence belongs to the FKBP-type PPIase family. Tig subfamily.

It localises to the cytoplasm. The enzyme catalyses [protein]-peptidylproline (omega=180) = [protein]-peptidylproline (omega=0). Involved in protein export. Acts as a chaperone by maintaining the newly synthesized protein in an open conformation. Functions as a peptidyl-prolyl cis-trans isomerase. This Clostridium botulinum (strain Eklund 17B / Type B) protein is Trigger factor.